The following is a 398-amino-acid chain: Cation channel sperm-associated protein 3 (398 aa).

Topologically, residues 1 to 48 are cytoplasmic; it reads MSQHRHQRHSRVISSSPVDTTSVGFCPTFKKFKRNDDECRAFVKRVIM. A helical transmembrane segment spans residues 49–71; the sequence is SRFFKIIMISTVTSNAFFMALWT. The Extracellular segment spans residues 72–80; sequence SYDIRYRLF. The helical transmembrane segment at 81 to 107 threads the bilayer; it reads RLLEFSEIFFVSICTSELSMKVYVDPI. N108 is a topological domain (cytoplasmic). The helical transmembrane segment at 109-131 threads the bilayer; the sequence is YWKNGYNLLDVIIIIVMFLPYAL. Over 132-143 the chain is Extracellular; that stretch reads RQLMGKQFTYLY. The chain crosses the membrane as a helical span at residues 144 to 160; sequence IADGMQSLRILKLIGYS. The Cytoplasmic portion of the chain corresponds to 161–168; that stretch reads QGIRTLIT. The chain crosses the membrane as a helical span at residues 169-195; it reads AVGQTVYTVASVLLLLFLLMYIFAILG. Residues 196–216 lie on the Extracellular side of the membrane; it reads FCLFGSPDNGDHDNWGNLAAA. An intramembrane region (helical; Pore-forming) is located at residues 217-236; that stretch reads FFTLFSLATVDGWTDLQKQL. At 237–242 the chain is on the extracellular side; it reads DNREFA. A helical transmembrane segment spans residues 243 to 268; it reads LSRAFTIIFILLASFIFLNMFVGVMI. Residues 269 to 398 are Cytoplasmic-facing; the sequence is MHTEDSIRKF…PQSLEKVDEK (130 aa).

The protein belongs to the cation channel sperm-associated (TC 1.A.1.19) family. Component of the CatSper complex or CatSpermasome composed of the core pore-forming members CATSPER1, CATSPER2, CATSPER3 and CATSPER4 as well as auxiliary members CATSPERB, CATSPERG, CATSPERD, CATSPERE, CATSPERZ, C2CD6/CATSPERT, TMEM249, TMEM262 and EFCAB9. HSPA1 may be an additional auxiliary complex member. The core complex members CATSPER1, CATSPER2, CATSPER3 and CATSPER4 form a heterotetrameric channel. The auxiliary CATSPERB, CATSPERG, CATSPERD and CATSPERE subunits form a pavilion-like structure over the pore which stabilizes the complex through interactions with CATSPER4, CATSPER3, CATSPER1 and CATSPER2 respectively. TMEM262/CATSPERH interacts with CATSPERB, further stabilizing the complex. C2CD6/CATSPERT interacts at least with CATSPERD and is required for targeting the CatSper complex in the flagellar membrane. Testis-specific.

It localises to the cell projection. The protein localises to the cilium. The protein resides in the flagellum membrane. The catalysed reaction is Ca(2+)(in) = Ca(2+)(out). The CatSper calcium channel is indirectly activated by extracellular progesterone and prostaglandins following the sequence: progesterone &gt; PGF1-alpha = PGE1 &gt; PGA1 &gt; PGE2 &gt;&gt; PGD2. The CatSper calcium channel is directly inhibited by endocannabinoid 2-arachidonoylglycerol (2AG). Indirect activation by progesterone takes place via the following mechanism: progesterone binds and activates the acylglycerol lipase ABHD2, which in turn mediates hydrolysis of 2AG inhibitor, relieving inhibition of the CatSper channel. The primary effect of progesterone activation is to shift voltage dependence towards more physiological, negative membrane potentials; it is not mediated by metabotropic receptors and second messengers. Sperm capacitation enhances the effect of progesterone by providing additional negative shift. Also activated by the elevation of intracellular pH. In terms of biological role, pore-forming subunit of the CatSper complex, a sperm-specific voltage-gated calcium channel that plays a central role in calcium-dependent physiological responses essential for successful fertilization, such as sperm hyperactivation, acrosome reaction and chemotaxis towards the oocyte. The sequence is that of Cation channel sperm-associated protein 3 (CATSPER3) from Homo sapiens (Human).